A 72-amino-acid polypeptide reads, in one-letter code: Translation initiation factor IF-1 (72 aa).

The 72-residue stretch at 1–72 (MAREDHIEME…SKGRIVYRAR (72 aa)) folds into the S1-like domain.

It belongs to the IF-1 family. In terms of assembly, component of the 30S ribosomal translation pre-initiation complex which assembles on the 30S ribosome in the order IF-2 and IF-3, IF-1 and N-formylmethionyl-tRNA(fMet); mRNA recruitment can occur at any time during PIC assembly.

Its subcellular location is the cytoplasm. Its function is as follows. One of the essential components for the initiation of protein synthesis. Stabilizes the binding of IF-2 and IF-3 on the 30S subunit to which N-formylmethionyl-tRNA(fMet) subsequently binds. Helps modulate mRNA selection, yielding the 30S pre-initiation complex (PIC). Upon addition of the 50S ribosomal subunit IF-1, IF-2 and IF-3 are released leaving the mature 70S translation initiation complex. The sequence is that of Translation initiation factor IF-1 from Chromohalobacter salexigens (strain ATCC BAA-138 / DSM 3043 / CIP 106854 / NCIMB 13768 / 1H11).